The chain runs to 623 residues: Replication protein A 70 kDa DNA-binding subunit (623 aa).

An N-acetylmethionine modification is found at Met-1. Glycyl lysine isopeptide (Lys-Gly) (interchain with G-Cter in ubiquitin) cross-links involve residues Lys-22 and Lys-88. A disordered region spans residues 116 to 163 (VPYNEGYGQQQQQQQQQQQQAVPSPASAATPPASKPQPQNGSLGMGST). Positions 124-154 (QQQQQQQQQQQQAVPSPASAATPPASKPQPQ) are enriched in low complexity. An N6-acetyllysine; alternate mark is found at Lys-172 and Lys-176. Glycyl lysine isopeptide (Lys-Gly) (interchain with G-Cter in ubiquitin); alternate cross-links involve residues Lys-172 and Lys-176. Residue Thr-189 is modified to Phosphothreonine. Lys-192 is covalently cross-linked (Glycyl lysine isopeptide (Lys-Gly) (interchain with G-Cter in ubiquitin)). At Thr-200 the chain carries Phosphothreonine. Positions 206-290 (WTICARVTNK…VKNDYEMTFN (85 aa)) form a DNA-binding region, OB. Glycyl lysine isopeptide (Lys-Gly) (interchain with G-Cter in ubiquitin) cross-links involve residues Lys-229 and Lys-253. Lys-268 carries the N6-acetyllysine; alternate modification. Residue Lys-268 forms a Glycyl lysine isopeptide (Lys-Gly) (interchain with G-Cter in ubiquitin); alternate linkage. Residues Lys-276 and Lys-340 each participate in a glycyl lysine isopeptide (Lys-Gly) (interchain with G-Cter in ubiquitin) cross-link. Ser-393 carries the phosphoserine modification. Lys-419 participates in a covalent cross-link: Glycyl lysine isopeptide (Lys-Gly) (interchain with G-Cter in ubiquitin). Lys-458 participates in a covalent cross-link: Glycyl lysine isopeptide (Lys-Gly) (interchain with G-Cter in SUMO). Lys-467 is covalently cross-linked (Glycyl lysine isopeptide (Lys-Gly) (interchain with G-Cter in ubiquitin)). The C4-type zinc-finger motif lies at 490–512 (CPTQDCNKKVIDQQNGLYRCEKC). Lys-562 participates in a covalent cross-link: Glycyl lysine isopeptide (Lys-Gly) (interchain with G-Cter in ubiquitin). Residue Lys-586 forms a Glycyl lysine isopeptide (Lys-Gly) (interchain with G-Cter in SUMO) linkage.

It belongs to the replication factor A protein 1 family. Component of the canonical replication protein A complex (RPA), a heterotrimer composed of RPA1, RPA2 and RPA3. The DNA-binding activity may reside exclusively on the RPA1 subunit. Interacts with PRPF19; the PRP19-CDC5L complex is recruited to the sites of DNA repair where it ubiquitinates the replication protein A complex (RPA). Interacts with RIPK1. Interacts with the polymerase alpha subunit POLA1/p180; this interaction stabilizes the replicative complex and reduces the misincorporation rate of DNA polymerase alpha by acting as a fidelity clamp. Interacts with RAD51 and SENP6 to regulate DNA repair. Interacts with HELB; this interaction promotes HELB recruitment to chromatin following DNA damage. Interacts with PRIMPOL; leading to recruit PRIMPOL on chromatin and stimulate its DNA primase activity. Interacts with XPA; the interaction is direct and associates XPA with the RPA complex. Interacts with ETAA1; the interaction is direct and promotes ETAA1 recruitment at stalled replication forks. Interacts with RPA1; this interaction associates HROB with the RPA complex. Interacts (when poly-ADP-ribosylated) with HTATSF1. Post-translationally, DNA damage-induced 'Lys-63'-linked polyubiquitination by PRPF19 mediates ATRIP recruitment to the RPA complex at sites of DNA damage and activation of ATR. Ubiquitinated by RFWD3 at stalled replication forks in response to DNA damage: ubiquitination by RFWD3 does not lead to degradation by the proteasome and promotes removal of the RPA complex from stalled replication forks, promoting homologous recombination. In terms of processing, sumoylated on lysine residues Lys-458 and Lys-586, with Lys-458 being the major site. Sumoylation promotes recruitment of RAD51 to the DNA damage foci to initiate DNA repair through homologous recombination. Desumoylated by SENP6. Poly-ADP-ribosylated by PARP1; promoting recruitment of HTATSF1.

Its subcellular location is the nucleus. It is found in the PML body. Its function is as follows. As part of the heterotrimeric replication protein A complex (RPA/RP-A), binds and stabilizes single-stranded DNA intermediates, that form during DNA replication or upon DNA stress. It prevents their reannealing and in parallel, recruits and activates different proteins and complexes involved in DNA metabolism. Thereby, it plays an essential role both in DNA replication and the cellular response to DNA damage. In the cellular response to DNA damage, the RPA complex controls DNA repair and DNA damage checkpoint activation. Through recruitment of ATRIP activates the ATR kinase a master regulator of the DNA damage response. It is required for the recruitment of the DNA double-strand break repair factors RAD51 and RAD52 to chromatin in response to DNA damage. Also recruits to sites of DNA damage proteins like XPA and XPG that are involved in nucleotide excision repair and is required for this mechanism of DNA repair. Also plays a role in base excision repair (BER) probably through interaction with UNG. Also recruits SMARCAL1/HARP, which is involved in replication fork restart, to sites of DNA damage. May also play a role in telomere maintenance. The protein is Replication protein A 70 kDa DNA-binding subunit (Rpa1) of Mus musculus (Mouse).